We begin with the raw amino-acid sequence, 945 residues long: Endo-1,4-beta-xylanase 1 (945 aa).

The span at 16–41 (NGDRNPDKKSRESMEVSRKDNEEPEK) shows a compositional bias: basic and acidic residues. The disordered stretch occupies residues 16–50 (NGDRNPDKKSRESMEVSRKDNEEPEKQNNNNVASI). CBM-cenC domains lie at 57-197 (NVIV…EGPS), 227-362 (IVVN…IEGP), and 397-541 (NILT…GPSS). Asn86, Asn239, Asn305, Asn349, Asn417, Asn453, and Asn687 each carry an N-linked (GlcNAc...) asparagine glycan. One can recognise a GH10 domain in the interval 589–884 (SGASVRVRQI…NEAGKRFLAV (296 aa)). The active-site Proton donor is Glu718. Glu819 acts as the Nucleophile in catalysis.

Belongs to the glycosyl hydrolase 10 (cellulase F) family. Predominantly expressed in vascular bundles, but not in vessel cells. Mostly expressed in stems, at lower levels in roots, and weakly in inflorescences and seedlings.

It localises to the secreted. The protein localises to the cell wall. It catalyses the reaction Endohydrolysis of (1-&gt;4)-beta-D-xylosidic linkages in xylans.. It functions in the pathway glycan degradation; xylan degradation. Binds to and hydrolyzes insoluble and soluble xylan substrates. Exhibits xylanase activity. The protein is Endo-1,4-beta-xylanase 1 of Arabidopsis thaliana (Mouse-ear cress).